The following is a 394-amino-acid chain: Elongation factor Tu (394 aa).

The tr-type G domain maps to 10 to 204 (KPHVNVGTIG…ALDSYIPEPE (195 aa)). A G1 region spans residues 19–26 (GHVDHGKT). Position 19 to 26 (19 to 26 (GHVDHGKT)) interacts with GTP. Threonine 26 contacts Mg(2+). The segment at 60-64 (GITIN) is G2. The segment at 81 to 84 (DCPG) is G3. Residues 81–85 (DCPGH) and 136–139 (NKCD) each bind GTP. Residues 136-139 (NKCD) form a G4 region. A G5 region spans residues 174-176 (SAL).

It belongs to the TRAFAC class translation factor GTPase superfamily. Classic translation factor GTPase family. EF-Tu/EF-1A subfamily. In terms of assembly, monomer.

It is found in the cytoplasm. The catalysed reaction is GTP + H2O = GDP + phosphate + H(+). Its function is as follows. GTP hydrolase that promotes the GTP-dependent binding of aminoacyl-tRNA to the A-site of ribosomes during protein biosynthesis. The polypeptide is Elongation factor Tu (Sodalis glossinidius (strain morsitans)).